Here is a 542-residue protein sequence, read N- to C-terminus: Chaperonin GroEL (542 aa).

ATP contacts are provided by residues 29–32 (TLGP), 86–90 (DGTTT), Gly-413, 477–479 (NAA), and Asp-493.

Belongs to the chaperonin (HSP60) family. Forms a cylinder of 14 subunits composed of two heptameric rings stacked back-to-back. Interacts with the co-chaperonin GroES.

Its subcellular location is the cytoplasm. It catalyses the reaction ATP + H2O + a folded polypeptide = ADP + phosphate + an unfolded polypeptide.. In terms of biological role, together with its co-chaperonin GroES, plays an essential role in assisting protein folding. The GroEL-GroES system forms a nano-cage that allows encapsulation of the non-native substrate proteins and provides a physical environment optimized to promote and accelerate protein folding. The polypeptide is Chaperonin GroEL (Heliobacterium modesticaldum (strain ATCC 51547 / Ice1)).